The chain runs to 310 residues: Putative methyltransferase mtx subunit H (310 aa).

It belongs to the MtrH family. In terms of assembly, may be part of a complex composed of 3 subunits; MtxA, MtxH and MtxX.

The chain is Putative methyltransferase mtx subunit H (mtxH) from Methanosarcina barkeri (strain Fusaro / DSM 804).